The chain runs to 132 residues: Amicyanin (132 aa).

The N-terminal stretch at Met1–Ala26 is a signal peptide. Position 27 is a pyrrolidone carboxylic acid (Gln27). In terms of domain architecture, Plastocyanin-like spans Gln27–Glu132. Cu cation is bound by residues His80, Cys119, His122, and Met125.

Cu cation is required as a cofactor.

It localises to the periplasm. Its pathway is one-carbon metabolism; methylamine degradation. Its function is as follows. Primary acceptor of electrons from methylamine dehydrogenase. Passes those electrons on either a soluble cytochrome c or to pseudoazurin. The sequence is that of Amicyanin (mauC) from Paracoccus versutus (Thiobacillus versutus).